A 264-amino-acid polypeptide reads, in one-letter code: tRNA1(Val) (adenine(37)-N6)-methyltransferase (264 aa).

The protein belongs to the methyltransferase superfamily. tRNA (adenine-N(6)-)-methyltransferase family.

It localises to the cytoplasm. It catalyses the reaction adenosine(37) in tRNA1(Val) + S-adenosyl-L-methionine = N(6)-methyladenosine(37) in tRNA1(Val) + S-adenosyl-L-homocysteine + H(+). Functionally, specifically methylates the adenine in position 37 of tRNA(1)(Val) (anticodon cmo5UAC). This Shewanella pealeana (strain ATCC 700345 / ANG-SQ1) protein is tRNA1(Val) (adenine(37)-N6)-methyltransferase.